A 487-amino-acid chain; its full sequence is Serralysin (487 aa).

Residues 1–16 constitute a propeptide that is removed on maturation; it reads MQSTKKAIEITESNFA. His-192 contributes to the Zn(2+) binding site. The active site involves Glu-193. Zn(2+) is bound by residues His-196, His-202, and Tyr-232. Arg-269, Gly-271, Thr-273, Asp-301, Gly-303, Gly-304, Asp-306, Thr-343, Glu-345, Gly-350, Gly-352, Asp-354, Asn-359, Ala-361, Asn-363, Gly-367, Gly-368, Ala-369, Asp-372, Gly-376, Gly-377, Gly-378, Gly-379, Asp-381, Gly-385, Gly-386, Ala-387, Gly-388, Asp-390, Asp-399, Asp-406, and Asp-416 together coordinate Ca(2+). Hemolysin-type calcium-binding repeat units lie at residues 348 to 365 and 366 to 383; these read IGGS…NNVL and KGGA…ADEL.

Belongs to the peptidase M10B family. It depends on Ca(2+) as a cofactor. Requires Zn(2+) as cofactor.

It is found in the secreted. The catalysed reaction is Preferential cleavage of bonds with hydrophobic residues in P1'.. Functionally, naturally present in the silkworm intestine and allows the emerging moth to dissolve its cocoon. This chain is Serralysin, found in Serratia marcescens (strain ATCC 21074 / E-15).